The sequence spans 61 residues: Large ribosomal subunit protein uL30 (61 aa).

The protein belongs to the universal ribosomal protein uL30 family. Part of the 50S ribosomal subunit.

The chain is Large ribosomal subunit protein uL30 from Thermosipho africanus (strain TCF52B).